A 551-amino-acid chain; its full sequence is Cytochrome P450 monooxygenase abl5 (551 aa).

Asn24 carries an N-linked (GlcNAc...) asparagine glycan. A helical membrane pass occupies residues 37–57 (VVLNTLTAIVVVWICYRAVIY). Asn174, Asn218, Asn283, Asn307, and Asn441 each carry an N-linked (GlcNAc...) asparagine glycan. Cys495 is a heme binding site.

Belongs to the cytochrome P450 family. The cofactor is heme.

It localises to the membrane. In terms of biological role, cytochrome P450 monooxygenase; part of the gene cluster that mediates the biosynthesis of abscisic acid (ABA), a phytohormone that acts antagonistically toward salicylic acid (SA), jasmonic acid (JA) and ethylene (ETH) signaling, to impede plant defense responses. The first step of the pathway catalyzes the reaction from farnesyl diphosphate to alpha-ionylideneethane performed by the alpha-ionylideneethane synthase abl3 via a three-step reaction mechanism involving 2 neutral intermediates, beta-farnesene and allofarnesene. The cytochrome P450 monooxygenase abl1 might then be involved in the conversion of alpha-ionylideneethane to alpha-ionylideneacetic acid. Alpha-ionylideneacetic acid is further converted to abscisic acid in 2 steps involving the cytochrome P450 monooxygenase abl2 and the short-chain dehydrogenase/reductase abl4, via the intermediates 1'-deoxy-ABA or 1',4'-trans-diol-ABA, depending on the order of action of these 2 enzymes. Abl2 is responsible for the hydroxylation of carbon atom C-1' and abl4 might be involved in the oxidation of the C-4' carbon atom. The cytochrome monooxygenase abl5 seems not essential for the biosynthesis of ABA and its function remains to be identified. In Leptosphaeria maculans (strain JN3 / isolate v23.1.3 / race Av1-4-5-6-7-8) (Blackleg fungus), this protein is Cytochrome P450 monooxygenase abl5.